The primary structure comprises 480 residues: Glutathione reductase (480 aa).

FAD-binding residues include serine 31 and glycine 32. Serine 31 lines the glutathione pocket. Arginine 38 is a binding site for glutathione. 4 residues coordinate FAD: glutamate 51, threonine 58, cysteine 59, and lysine 67. An intrachain disulfide couples cysteine 59 to cysteine 64. Glutathione is bound at residue tyrosine 121. An FAD-binding site is contributed by alanine 137. Residues isoleucine 206, glutamate 209, arginine 226, and glycine 291 each contribute to the NADP(+) site. Aspartate 331 contacts FAD. Glutamate 337 provides a ligand contact to NADP(+). Threonine 339 is an FAD binding site. Residue arginine 347 coordinates glutathione. Valine 372 contacts NADP(+). A glutathione-binding site is contributed by lysine 422. Histidine 469 provides a ligand contact to FAD. The active-site Proton acceptor is histidine 469.

It belongs to the class-I pyridine nucleotide-disulfide oxidoreductase family. In terms of assembly, homodimer. The cofactor is FAD.

It is found in the cytoplasm. It localises to the mitochondrion. It catalyses the reaction 2 glutathione + NADP(+) = glutathione disulfide + NADPH + H(+). Functionally, catalyzes the reduction of glutathione disulfide (GSSG) to reduced glutathione (GSH). Constitutes the major mechanism to maintain a high GSH:GSSG ratio in the cytosol. This is Glutathione reductase (GLR1) from Eremothecium gossypii (strain ATCC 10895 / CBS 109.51 / FGSC 9923 / NRRL Y-1056) (Yeast).